We begin with the raw amino-acid sequence, 501 residues long: Nucleic-acid-binding protein from transposon X-element (501 aa).

Disordered regions lie at residues Ser-20–Asn-71 and Ala-105–Pro-128. The CCHC-type zinc-finger motif lies at Val-285–Lys-302. Disordered regions lie at residues Arg-353–Gly-385 and Gln-400–Ser-443. Positions Gln-407–Arg-422 are enriched in low complexity. Positions Gly-434–Ser-443 are enriched in polar residues.

It is found in the virion. Functionally, strongly basic protein that binds directly to retroviral RNA and may be involved in its packaging and in the reverse transcription process. In Drosophila melanogaster (Fruit fly), this protein is Nucleic-acid-binding protein from transposon X-element.